The sequence spans 450 residues: F-box protein KIB3 (450 aa).

Residues 20–50 (DLVRLILERLSFVDFHRARCVSSTWYVASKS) form the F-box domain.

The protein resides in the cytoplasm. Its subcellular location is the nucleus. The protein localises to the nucleolus. Functionally, component of SCF(ASK-cullin-F-box) E3 ubiquitin ligase complexes, which may mediate the ubiquitination and subsequent proteasomal degradation of target proteins. Required for brassinosteroid (BR) signal transduction. Mediates ASK7/BIN2/SK21 inactivation both by competing with substrate binding (e.g. BZR1) and by promoting its ubiquitination and subsequent proteasomal degradation. The chain is F-box protein KIB3 from Arabidopsis thaliana (Mouse-ear cress).